We begin with the raw amino-acid sequence, 501 residues long: Glycerol kinase (501 aa).

Threonine 12 contacts ADP. Threonine 12, threonine 13, and serine 14 together coordinate ATP. Threonine 12 is a binding site for sn-glycerol 3-phosphate. ADP is bound at residue arginine 16. Residues arginine 82, glutamate 83, tyrosine 134, and aspartate 244 each contribute to the sn-glycerol 3-phosphate site. Arginine 82, glutamate 83, tyrosine 134, aspartate 244, and glutamine 245 together coordinate glycerol. Threonine 266 and glycine 310 together coordinate ADP. ATP-binding residues include threonine 266, glycine 310, glutamine 314, and glycine 411. The ADP site is built by glycine 411 and asparagine 415.

It belongs to the FGGY kinase family.

The enzyme catalyses glycerol + ATP = sn-glycerol 3-phosphate + ADP + H(+). It functions in the pathway polyol metabolism; glycerol degradation via glycerol kinase pathway; sn-glycerol 3-phosphate from glycerol: step 1/1. Its activity is regulated as follows. Inhibited by fructose 1,6-bisphosphate (FBP). Key enzyme in the regulation of glycerol uptake and metabolism. Catalyzes the phosphorylation of glycerol to yield sn-glycerol 3-phosphate. The sequence is that of Glycerol kinase from Methylorubrum extorquens (strain PA1) (Methylobacterium extorquens).